Reading from the N-terminus, the 864-residue chain is Leucine--tRNA ligase (864 aa).

A 'HIGH' region motif is present at residues 42–52; the sequence is PYPSGKLHMGH. The short motif at 624-628 is the 'KMSKS' region element; the sequence is KMSKS. ATP is bound at residue Lys-627.

The protein belongs to the class-I aminoacyl-tRNA synthetase family.

The protein resides in the cytoplasm. The enzyme catalyses tRNA(Leu) + L-leucine + ATP = L-leucyl-tRNA(Leu) + AMP + diphosphate. In Burkholderia multivorans (strain ATCC 17616 / 249), this protein is Leucine--tRNA ligase.